A 173-amino-acid chain; its full sequence is Mesencephalic astrocyte-derived neurotrophic factor homolog (173 aa).

An N-terminal signal peptide occupies residues 1 to 22 (MKTTHLVLVLCFLAGVAQTTLA). Cystine bridges form between Cys-28–Cys-114, Cys-31–Cys-103, Cys-61–Cys-72, and Cys-148–Cys-151.

It belongs to the ARMET family.

The protein localises to the secreted. Its function is as follows. Required during the maturation of the embryonic nervous system for maintenance of neuronal and cuticular connectivity. Essential for maintenance of dopaminergic neurons and dopamine levels. This is Mesencephalic astrocyte-derived neurotrophic factor homolog from Drosophila persimilis (Fruit fly).